Reading from the N-terminus, the 293-residue chain is Pyridoxal 5'-phosphate synthase subunit PdxS (293 aa).

Aspartate 23 is a binding site for D-ribose 5-phosphate. Catalysis depends on lysine 80, which acts as the Schiff-base intermediate with D-ribose 5-phosphate. Glycine 152 is a binding site for D-ribose 5-phosphate. D-glyceraldehyde 3-phosphate is bound at residue arginine 164. Residues glycine 213 and 234 to 235 (GS) contribute to the D-ribose 5-phosphate site.

The protein belongs to the PdxS/SNZ family. In terms of assembly, in the presence of PdxT, forms a dodecamer of heterodimers.

It carries out the reaction aldehydo-D-ribose 5-phosphate + D-glyceraldehyde 3-phosphate + L-glutamine = pyridoxal 5'-phosphate + L-glutamate + phosphate + 3 H2O + H(+). It functions in the pathway cofactor biosynthesis; pyridoxal 5'-phosphate biosynthesis. Catalyzes the formation of pyridoxal 5'-phosphate from ribose 5-phosphate (RBP), glyceraldehyde 3-phosphate (G3P) and ammonia. The ammonia is provided by the PdxT subunit. Can also use ribulose 5-phosphate and dihydroxyacetone phosphate as substrates, resulting from enzyme-catalyzed isomerization of RBP and G3P, respectively. The polypeptide is Pyridoxal 5'-phosphate synthase subunit PdxS (Thermus thermophilus (strain ATCC BAA-163 / DSM 7039 / HB27)).